We begin with the raw amino-acid sequence, 167 residues long: Probable chorismate pyruvate-lyase (167 aa).

Substrate is bound by residues arginine 71, isoleucine 110, and glutamate 150.

The protein belongs to the UbiC family.

The protein localises to the cytoplasm. It catalyses the reaction chorismate = 4-hydroxybenzoate + pyruvate. It functions in the pathway cofactor biosynthesis; ubiquinone biosynthesis. Removes the pyruvyl group from chorismate, with concomitant aromatization of the ring, to provide 4-hydroxybenzoate (4HB) for the ubiquinone pathway. The protein is Probable chorismate pyruvate-lyase of Acinetobacter baylyi (strain ATCC 33305 / BD413 / ADP1).